We begin with the raw amino-acid sequence, 690 residues long: MAKDFLLEIGTEEIPAKFAPGVLNQLREQAQKYCQELRLDYQDLKVYTTPRRFAVLIQGLAEKQTDFTAEVKGPAVKAAYDAEGNPTKAAQGFARGQGVEPKDLFVQELNGVSYVYARKFELGQPTLQLLPKLCTDLITGLHFPKPMRWADLEFRFARPIRWIVALFGSEVIPFEFVGLASGKASRGHRTLGGPVTLDSPADYEKQMLQAFVMVDPEQRRQSVWEQIHALAAKVGGDVEKDDDLLDEVTHIIEYPTALLGEVAPNYMHLPEPVITTPMKEHQRYFPVRDKEGKLLPYFITVRNGDDYALAKVKAGNEKVLKARLEDAAFYYREDQKTPLAELVEKLDKVTYHEKLGSVRQRVERIRTLARGIAARLGMESEKQDLVERTALLAKADLVTLMVYDFPELQGIMGADYARMVGEKPEVCTGILEHYQPRFAGDELPQSYTGQIVSVADKLDAIVGAFGIGIQPTGSQDPYALRRQAQGVVGIILEAGWDISLEQLIAASYVNFAEQGISLLPLADLQSALQDFFQQRLRFVLQEQGARYDTLDAVLAQGSNQITRAARKAQVLAAKRETTEFVPYSQAYIRCLNLSKKAQTQPLDPKNLIDPTEIALAAALVQRQEAFAALIEKGDYAEAYALASELIPMIEALFNAVMIMVEDEILKQARLALLGECVAILGCLGDLSLLA.

Belongs to the class-II aminoacyl-tRNA synthetase family. In terms of assembly, tetramer of two alpha and two beta subunits.

The protein resides in the cytoplasm. The catalysed reaction is tRNA(Gly) + glycine + ATP = glycyl-tRNA(Gly) + AMP + diphosphate. In Desulfitobacterium hafniense (strain DSM 10664 / DCB-2), this protein is Glycine--tRNA ligase beta subunit.